Reading from the N-terminus, the 312-residue chain is tRNA dimethylallyltransferase (312 aa).

An ATP-binding site is contributed by 11 to 18 (GPTAVGKT). 13 to 18 (TAVGKT) serves as a coordination point for substrate. Residues 159-163 (QRVLR) form an interaction with substrate tRNA region.

It belongs to the IPP transferase family. Monomer. The cofactor is Mg(2+).

The catalysed reaction is adenosine(37) in tRNA + dimethylallyl diphosphate = N(6)-dimethylallyladenosine(37) in tRNA + diphosphate. Catalyzes the transfer of a dimethylallyl group onto the adenine at position 37 in tRNAs that read codons beginning with uridine, leading to the formation of N6-(dimethylallyl)adenosine (i(6)A). This chain is tRNA dimethylallyltransferase, found in Macrococcus caseolyticus (strain JCSC5402) (Macrococcoides caseolyticum).